We begin with the raw amino-acid sequence, 102 residues long: Large ribosomal subunit protein bL21 (102 aa).

This sequence belongs to the bacterial ribosomal protein bL21 family. In terms of assembly, part of the 50S ribosomal subunit. Contacts protein L20.

This protein binds to 23S rRNA in the presence of protein L20. This Nitratidesulfovibrio vulgaris (strain ATCC 29579 / DSM 644 / CCUG 34227 / NCIMB 8303 / VKM B-1760 / Hildenborough) (Desulfovibrio vulgaris) protein is Large ribosomal subunit protein bL21.